Consider the following 675-residue polypeptide: NADH-quinone oxidoreductase subunit G (675 aa).

In terms of domain architecture, 2Fe-2S ferredoxin-type spans 1-78 (MIKLIIDGSE…GMVIHTDTSM (78 aa)). [2Fe-2S] cluster-binding residues include Cys34, Cys45, Cys48, and Cys62. The 4Fe-4S His(Cys)3-ligated-type domain maps to 78-117 (MVKKAREGVMEFLLINHPLDCPICDQGGECDLQDQAFRYG). Residues His94, Cys98, Cys101, Cys107, Cys146, Cys149, Cys152, and Cys196 each contribute to the [4Fe-4S] cluster site. The region spanning 215–271 (LKHTASIGVHDAEGSNIRIDSRADEIMRILPSVNEAINEAWISDKNRFCYDGLKYQR) is the 4Fe-4S Mo/W bis-MGD-type domain.

This sequence belongs to the complex I 75 kDa subunit family. Requires [2Fe-2S] cluster as cofactor. [4Fe-4S] cluster is required as a cofactor.

It carries out the reaction a quinone + NADH + 5 H(+)(in) = a quinol + NAD(+) + 4 H(+)(out). Functionally, NDH-1 shuttles electrons from NADH, via FMN and iron-sulfur (Fe-S) centers, to quinones in the respiratory chain. Couples the redox reaction to proton translocation (for every two electrons transferred, four hydrogen ions are translocated across the cytoplasmic membrane), and thus conserves the redox energy in a proton gradient. This Rickettsia typhi (strain ATCC VR-144 / Wilmington) protein is NADH-quinone oxidoreductase subunit G (nuoG).